The following is a 447-amino-acid chain: UDP-N-acetylmuramate--L-alanine ligase (447 aa).

Gly-108 to Ser-114 provides a ligand contact to ATP.

This sequence belongs to the MurCDEF family.

The protein localises to the cytoplasm. The catalysed reaction is UDP-N-acetyl-alpha-D-muramate + L-alanine + ATP = UDP-N-acetyl-alpha-D-muramoyl-L-alanine + ADP + phosphate + H(+). It participates in cell wall biogenesis; peptidoglycan biosynthesis. Its function is as follows. Cell wall formation. The sequence is that of UDP-N-acetylmuramate--L-alanine ligase from Listeria monocytogenes serotype 4a (strain HCC23).